The chain runs to 434 residues: Histidine--tRNA ligase (434 aa).

It belongs to the class-II aminoacyl-tRNA synthetase family. As to quaternary structure, homodimer.

The protein resides in the cytoplasm. The enzyme catalyses tRNA(His) + L-histidine + ATP = L-histidyl-tRNA(His) + AMP + diphosphate + H(+). The polypeptide is Histidine--tRNA ligase (Latilactobacillus sakei subsp. sakei (strain 23K) (Lactobacillus sakei subsp. sakei)).